Reading from the N-terminus, the 103-residue chain is Large ribosomal subunit protein bL21 (103 aa).

The protein belongs to the bacterial ribosomal protein bL21 family. Part of the 50S ribosomal subunit. Contacts protein L20.

This protein binds to 23S rRNA in the presence of protein L20. This chain is Large ribosomal subunit protein bL21, found in Nautilia profundicola (strain ATCC BAA-1463 / DSM 18972 / AmH).